A 559-amino-acid polypeptide reads, in one-letter code: Frizzled-1 (559 aa).

A signal peptide spans 1–35 (MKHSHLLQRCSAQLCTRGSSLILSLLLSVCLSVEG). Residues 36-239 (QYNGEKGISI…FAPEELNFAR (204 aa)) lie on the Extracellular side of the membrane. Positions 46–165 (PDHGYCQPIS…NGAGELCVGQ (120 aa)) constitute an FZ domain. 5 disulfides stabilise this stretch: C51-C112, C59-C105, C96-C133, C122-C162, and C126-C150. N-linked (GlcNAc...) asparagine glycosylation is present at N65. N166 is a glycosylation site (N-linked (GlcNAc...) asparagine). A helical membrane pass occupies residues 240 to 260 (IWIGIWSVLCCASTLFTVLTY). The Cytoplasmic segment spans residues 261–273 (LVDMKRFSYPERP). Residues 274-294 (IIFLSGCYTMVAIAYIAGFLL) traverse the membrane as a helical segment. Over 295–321 (EDKVVCNERFAEDGYKTVAQGTKKEGC) the chain is Extracellular. Residues 322–342 (TFLFMMLYFFSMASSIWWVIL) form a helical membrane-spanning segment. Residues 343–364 (SLTWFLAAGMKWGHEAIEANSQ) are Cytoplasmic-facing. A helical membrane pass occupies residues 365–385 (YFHLAAWAVPAIKTITILAVG). Over 386–408 (QVDGDTLSGVCFVGINNVDALRG) the chain is Extracellular. A helical membrane pass occupies residues 409–429 (FVLAPLFVYLFIGTSFLLAGF). At 430-455 (VSLFRIRTIMKHDGTKTEKLEKLMVR) the chain is on the cytoplasmic side. A helical transmembrane segment spans residues 456–476 (IGIFSVLYTVPATIVIACYFY). Residues 477-513 (EQAFREQWEKSWISQSCKTYAIPCPSTGHPPMSPDFT) lie on the Extracellular side of the membrane. Residues 514-534 (VFMIKYLMTLIVGITSGFWIW) traverse the membrane as a helical segment. The Cytoplasmic segment spans residues 535–559 (SGKTLNSWRKFYTRLTNSKQGETTV). Residues 537 to 542 (KTLNSW) carry the Lys-Thr-X-X-X-Trp motif, mediates interaction with the PDZ domain of Dvl family members motif. A PDZ-binding motif is present at residues 557 to 559 (TTV).

The protein belongs to the G-protein coupled receptor Fz/Smo family. Interacts with wnt8. In the embryo, expressed in the heart, pronephros and otic vesicles.

The protein localises to the cell membrane. Its function is as follows. Receptor for Wnt proteins. Functions in the canonical Wnt/beta-catenin signaling pathway. The canonical Wnt/beta-catenin signaling pathway leads to the activation of disheveled proteins, inhibition of GSK-3 kinase, nuclear accumulation of beta-catenin and activation of Wnt target genes. A second signaling pathway involving PKC and calcium fluxes has been seen for some family members, but it is not yet clear if it represents a distinct pathway or if it can be integrated in the canonical pathway, as PKC seems to be required for Wnt-mediated inactivation of GSK-3 kinase. Both pathways seem to involve interactions with G-proteins. May be involved in transduction and intercellular transmission of polarity information during tissue morphogenesis and/or in differentiated tissues. This is Frizzled-1 (fzd1) from Xenopus laevis (African clawed frog).